A 170-amino-acid chain; its full sequence is Small ribosomal subunit protein uS5 (170 aa).

An S5 DRBM domain is found at 13 to 76 (LTEKLIGVNR…DQARRSMVKI (64 aa)).

The protein belongs to the universal ribosomal protein uS5 family. Part of the 30S ribosomal subunit. Contacts proteins S4 and S8.

In terms of biological role, with S4 and S12 plays an important role in translational accuracy. Located at the back of the 30S subunit body where it stabilizes the conformation of the head with respect to the body. The protein is Small ribosomal subunit protein uS5 of Laribacter hongkongensis (strain HLHK9).